A 1181-amino-acid chain; its full sequence is DNA-directed RNA polymerase subunit beta' (1181 aa).

Cysteine 68, cysteine 70, cysteine 83, and cysteine 86 together coordinate Zn(2+). Residues aspartate 457, aspartate 459, and aspartate 461 each coordinate Mg(2+). The Zn(2+) site is built by cysteine 802, cysteine 876, cysteine 883, and cysteine 886.

The protein belongs to the RNA polymerase beta' chain family. In terms of assembly, the RNAP catalytic core consists of 2 alpha, 1 beta, 1 beta' and 1 omega subunit. When a sigma factor is associated with the core the holoenzyme is formed, which can initiate transcription. Requires Mg(2+) as cofactor. It depends on Zn(2+) as a cofactor.

It catalyses the reaction RNA(n) + a ribonucleoside 5'-triphosphate = RNA(n+1) + diphosphate. Functionally, DNA-dependent RNA polymerase catalyzes the transcription of DNA into RNA using the four ribonucleoside triphosphates as substrates. The chain is DNA-directed RNA polymerase subunit beta' from Syntrophomonas wolfei subsp. wolfei (strain DSM 2245B / Goettingen).